The chain runs to 215 residues: UPF0502 protein YceH (215 aa).

N6-acetyllysine is present on lysine 80.

It belongs to the UPF0502 family.

The sequence is that of UPF0502 protein YceH from Escherichia coli O45:K1 (strain S88 / ExPEC).